Here is a 210-residue protein sequence, read N- to C-terminus: Thiamine-phosphate synthase (210 aa).

4-amino-2-methyl-5-(diphosphooxymethyl)pyrimidine contacts are provided by residues 39-43 (QLREK) and Asn71. The Mg(2+) site is built by Asp72 and Asp91. Ser110 contacts 4-amino-2-methyl-5-(diphosphooxymethyl)pyrimidine. 134 to 136 (TPT) contacts 2-[(2R,5Z)-2-carboxy-4-methylthiazol-5(2H)-ylidene]ethyl phosphate. Residue Lys137 coordinates 4-amino-2-methyl-5-(diphosphooxymethyl)pyrimidine. Gly163 serves as a coordination point for 2-[(2R,5Z)-2-carboxy-4-methylthiazol-5(2H)-ylidene]ethyl phosphate.

The protein belongs to the thiamine-phosphate synthase family. Mg(2+) serves as cofactor.

It catalyses the reaction 2-[(2R,5Z)-2-carboxy-4-methylthiazol-5(2H)-ylidene]ethyl phosphate + 4-amino-2-methyl-5-(diphosphooxymethyl)pyrimidine + 2 H(+) = thiamine phosphate + CO2 + diphosphate. It carries out the reaction 2-(2-carboxy-4-methylthiazol-5-yl)ethyl phosphate + 4-amino-2-methyl-5-(diphosphooxymethyl)pyrimidine + 2 H(+) = thiamine phosphate + CO2 + diphosphate. The enzyme catalyses 4-methyl-5-(2-phosphooxyethyl)-thiazole + 4-amino-2-methyl-5-(diphosphooxymethyl)pyrimidine + H(+) = thiamine phosphate + diphosphate. Its pathway is cofactor biosynthesis; thiamine diphosphate biosynthesis; thiamine phosphate from 4-amino-2-methyl-5-diphosphomethylpyrimidine and 4-methyl-5-(2-phosphoethyl)-thiazole: step 1/1. In terms of biological role, condenses 4-methyl-5-(beta-hydroxyethyl)thiazole monophosphate (THZ-P) and 2-methyl-4-amino-5-hydroxymethyl pyrimidine pyrophosphate (HMP-PP) to form thiamine monophosphate (TMP). This Campylobacter jejuni subsp. jejuni serotype O:6 (strain 81116 / NCTC 11828) protein is Thiamine-phosphate synthase.